We begin with the raw amino-acid sequence, 428 residues long: Immunoglobulin superfamily containing leucine-rich repeat protein (428 aa).

Residues 1-18 form the signal peptide; sequence MQELHLLWWALLLGLAQA. In terms of domain architecture, LRRNT spans 19–50; it reads CPEPCDCGEKYGFQIADCAYRDLESVPPGFPA. The N-linked (GlcNAc...) asparagine glycan is linked to Asn-51. 5 LRR repeats span residues 51–72, 75–96, 99–122, 123–144, and 147–168; these read NVTT…AFRE, LLQS…ALAS, HLKS…HNLS, ALQL…AFRS, and ALRS…TFTP. Positions 180–231 constitute an LRRCT domain; it reads NPFDCTCGIVWLKTWALTTAVSIPEQDNIACTSPHVLKGTPLSRLPPLPCSA. In terms of domain architecture, Ig-like spans 232–343; sequence PSVQLSYQPS…GSAESSVDVA (112 aa). Cys-257 and Cys-327 are disulfide-bonded. An N-linked (GlcNAc...) asparagine glycan is attached at Asn-309.

As to expression, expressed in various tissues including retina, heart, skeletal muscle, prostate, ovary, small intestine, thyroid, adrenal cortex, testis, stomach and spinal cord.

Its subcellular location is the secreted. This Homo sapiens (Human) protein is Immunoglobulin superfamily containing leucine-rich repeat protein (ISLR).